Reading from the N-terminus, the 151-residue chain is Large ribosomal subunit protein bL9 (151 aa).

This sequence belongs to the bacterial ribosomal protein bL9 family.

Its function is as follows. Binds to the 23S rRNA. This chain is Large ribosomal subunit protein bL9, found in Lactobacillus delbrueckii subsp. bulgaricus (strain ATCC BAA-365 / Lb-18).